The following is a 373-amino-acid chain: Pollen allergen KBG 31 (373 aa).

The N-terminal stretch at 1–28 is a signal peptide; it reads MDKANGAYKTALKAASAVAPAEKFPVFQ.

Belongs to the Poa p IX/Phl p VI allergen family. Pollen.

In Poa pratensis (Kentucky bluegrass), this protein is Pollen allergen KBG 31.